The primary structure comprises 554 residues: Nonribosomal peptide synthetase ALT12 (554 aa).

The region spanning 1–76 is the Carrier domain; the sequence is MASLEHMKRI…TLWEAMNDTQ (76 aa). O-(pantetheine 4'-phosphoryl)serine is present on Ser35. The segment at 124–434 is condensation; the sequence is VQDNVLCVAP…QRIQNEITST (311 aa).

Belongs to the NRP synthetase family.

The protein operates within mycotoxin biosynthesis. In terms of biological role, nonribosomal peptide synthetase; part of the gene cluster that mediates the biosynthesis of the host-selective toxins (HSTs) AAL-toxins, sphinganine-analog mycotoxins responsible for Alternaria stem canker on tomato by the tomato pathotype. The biosynthesis starts with the polyketide synthase ALT1-catalyzed C-16 carbon chain assembly from one starter acetyl-CoA unit with malonyl-CoA extender units. ALT1 also selectively transfers methyl groups at the first and the third cycle of chain elongation for AAL toxin. The C-16 polyketide chain is released from the enzyme by a nucleophilic attack of a carbanion, which is derived from R-carbon of glycin by decarboxylation, on the carbonyl carbon of polyketide acyl chain. This step is probably catalyzed by a pyridoxal 5'-phosphate-dependent aminoacyl transferase ALT4. The respective functions of the other enzymes encoded by the cluster have still to be elucidated. The sphingosine N-acyltransferase-like protein ALT7 seems not to act as a resistance/self-tolerance factor against the toxin in the toxin biosynthetic gene cluster, contrary to what is expected. The polypeptide is Nonribosomal peptide synthetase ALT12 (Alternaria alternata (Alternaria rot fungus)).